The sequence spans 246 residues: Probable transcriptional regulatory protein CLB_3102 (246 aa).

This sequence belongs to the TACO1 family.

Its subcellular location is the cytoplasm. This is Probable transcriptional regulatory protein CLB_3102 from Clostridium botulinum (strain ATCC 19397 / Type A).